The sequence spans 138 residues: Cysteine desulfuration protein SufE (138 aa).

The active-site Cysteine persulfide intermediate is the Cys-51.

The protein belongs to the SufE family. Homodimer. Interacts with SufS.

Its subcellular location is the cytoplasm. It participates in cofactor biosynthesis; iron-sulfur cluster biosynthesis. Functionally, participates in cysteine desulfuration mediated by SufS. Cysteine desulfuration mobilizes sulfur from L-cysteine to yield L-alanine and constitutes an essential step in sulfur metabolism for biosynthesis of a variety of sulfur-containing biomolecules. Functions as a sulfur acceptor for SufS, by mediating the direct transfer of the sulfur atom from the S-sulfanylcysteine of SufS, an intermediate product of cysteine desulfuration process. In Pectobacterium carotovorum subsp. carotovorum (strain PC1), this protein is Cysteine desulfuration protein SufE.